A 490-amino-acid polypeptide reads, in one-letter code: UDP-N-acetylmuramate--L-alanine ligase (490 aa).

An ATP-binding site is contributed by 133–139; sequence GTHGKTS.

The protein belongs to the MurCDEF family.

The protein localises to the cytoplasm. The catalysed reaction is UDP-N-acetyl-alpha-D-muramate + L-alanine + ATP = UDP-N-acetyl-alpha-D-muramoyl-L-alanine + ADP + phosphate + H(+). The protein operates within cell wall biogenesis; peptidoglycan biosynthesis. In terms of biological role, cell wall formation. This is UDP-N-acetylmuramate--L-alanine ligase from Saccharopolyspora erythraea (strain ATCC 11635 / DSM 40517 / JCM 4748 / NBRC 13426 / NCIMB 8594 / NRRL 2338).